The following is a 62-amino-acid chain: Photosystem II reaction center protein Z (62 aa).

Transmembrane regions (helical) follow at residues 8 to 28 and 41 to 61; these read AVFA…VVFA and FSGT…NSLI.

The protein belongs to the PsbZ family. As to quaternary structure, PSII is composed of 1 copy each of membrane proteins PsbA, PsbB, PsbC, PsbD, PsbE, PsbF, PsbH, PsbI, PsbJ, PsbK, PsbL, PsbM, PsbT, PsbY, PsbZ, Psb30/Ycf12, at least 3 peripheral proteins of the oxygen-evolving complex and a large number of cofactors. It forms dimeric complexes.

The protein localises to the plastid. Its subcellular location is the chloroplast thylakoid membrane. In terms of biological role, may control the interaction of photosystem II (PSII) cores with the light-harvesting antenna, regulates electron flow through the 2 photosystem reaction centers. PSII is a light-driven water plastoquinone oxidoreductase, using light energy to abstract electrons from H(2)O, generating a proton gradient subsequently used for ATP formation. The polypeptide is Photosystem II reaction center protein Z (Jasminum nudiflorum (Winter jasmine)).